The chain runs to 419 residues: CinA-like protein (419 aa).

This sequence belongs to the CinA family.

The protein is CinA-like protein of Picosynechococcus sp. (strain ATCC 27264 / PCC 7002 / PR-6) (Agmenellum quadruplicatum).